Consider the following 183-residue polypeptide: UPF0397 protein PBPRA2239 (183 aa).

5 helical membrane-spanning segments follow: residues 8–28 (VVLIAIGAALYGIGGLPMFGI), 41–61 (AVLALFSVLFGPLVGFLVGFI), 69–89 (FAGWGVWLTWVLGSGLVGLII), 110–130 (FALFVFLAFLGNVIGYGCSAY), and 147–167 (LIIIAAGNTLLIAIVGHYILT).

Belongs to the UPF0397 family.

The protein resides in the cell membrane. The sequence is that of UPF0397 protein PBPRA2239 from Photobacterium profundum (strain SS9).